The sequence spans 216 residues: MOB kinase activator-like 1 homolog B (216 aa).

Zn(2+) contacts are provided by Cys79, Cys84, His161, and His166.

Belongs to the MOB1/phocein family.

The polypeptide is MOB kinase activator-like 1 homolog B (mobB) (Dictyostelium discoideum (Social amoeba)).